The following is a 314-amino-acid chain: Coiled-coil domain-containing protein 92 (314 aa).

2 coiled-coil regions span residues 1–27 (MAATNLENQLHSAQKNLLFLQREHAST) and 59–113 (DSSS…EKKY). Disordered stretches follow at residues 153-193 (LSSS…KKSL) and 251-314 (ASDR…DRTV). Residues 176 to 186 (PPKDKLPETPR) are compositionally biased toward basic and acidic residues. Ser-192 carries the phosphoserine modification. A compositionally biased stretch (basic residues) spans 266–280 (KPHKTHVGVAHRIHH).

In terms of assembly, interacts with CEP164. In terms of processing, phosphorylated at Ser-192 by TTBK2.

It is found in the cytoplasm. The protein resides in the cytoskeleton. It localises to the microtubule organizing center. The protein localises to the centrosome. Its subcellular location is the centriole. Its function is as follows. Interferon-stimulated protein that plays a role in innate immunity. The polypeptide is Coiled-coil domain-containing protein 92 (Ccdc92) (Mus musculus (Mouse)).